Reading from the N-terminus, the 541-residue chain is Phosphatidylethanolamine transferase Mcr-1 (541 aa).

The Cytoplasmic segment spans residues 1-14 (MMQHTSVWYRRSVS). The chain crosses the membrane as a helical span at residues 15–35 (PFVLVASVAVFLTATANLTFF). The Periplasmic segment spans residues 36–47 (DKISQTYPIADN). A helical membrane pass occupies residues 48–68 (LGFVLTIAVVLFGAMLLITTL). Residues 69 to 73 (LSSYR) are Cytoplasmic-facing. The helical transmembrane segment at 74–94 (YVLKPVLILLLIMGAVTSYFT) threads the bilayer. At 95-122 (DTYGTVYDTTMLQNALQTDQAETKDLLN) the chain is on the periplasmic side. Residues 123–143 (AAFIMRIIGLGVLPSLLVAFV) form a helical membrane-spanning segment. At 144–157 (KVDYPTWGKGLMRR) the chain is on the cytoplasmic side. The helical transmembrane segment at 158–178 (LGLIVASLALILLPVVAFSSH) threads the bilayer. The Periplasmic portion of the chain corresponds to 179-541 (YASFFRVHKP…KVKDRTAFIR (363 aa)). Positions 246 and 285 each coordinate Zn(2+). Disulfide bonds link Cys281-Cys291, Cys356-Cys364, and Cys414-Cys422. Thr285 bears the Phosphothreonine mark. Zn(2+) is bound by residues Asp465 and His466.

The protein belongs to the phosphoethanolamine transferase family. In terms of assembly, monomer. In terms of processing, phosphorylated at Thr-285; may represent an intermediate in the catalytic mechanism.

The protein localises to the cell inner membrane. It carries out the reaction lipid A (E. coli) + a 1,2-diacyl-sn-glycero-3-phosphoethanolamine + H(+) = lipid A 4'-(2-aminoethyl diphosphate) (E. coli) + a 1,2-diacyl-sn-glycerol. EDTA may inhibit activity. May be inhibited by ethanolamine. In terms of biological role, probably catalyzes the addition of a phosphoethanolamine moiety to lipid A. Phosphoethanolamine modification of lipid A confers polymyxin resistance. Confers resistance to polymyxin-type antibiotics such as colistin; in the E.coli strain W3110. In Escherichia coli, this protein is Phosphatidylethanolamine transferase Mcr-1 (mcr1).